We begin with the raw amino-acid sequence, 1318 residues long: Major tegument protein (1318 aa).

The protein belongs to the herpesviridae MTP family. Interacts with host DAXX; this interaction disrupts the chromatin remodeling complex ATRX:DAXX and thus allows viral transcription. Interacts with host SMC6; this interaction targets SMC5-SMC6 complex for proteasomal degradation.

The protein resides in the virion tegument. The protein localises to the host nucleus. Its function is as follows. Tegument protein that plays a role in the inhibition of host intrinsic defenses to promote viral early gene activation. Interacts with host DAXX and thereby disrupts the complex between DAXX and ATRX. Suppresses the DAXX-ATRX dependent deposition of histone H3.3 on viral chromatin allowing viral transcription. Targets also host SMC5/6 for proteasomal degradation in a CUL7 and calpain-dependent manner to support nuclear membrane-less replication compartment formation and lytic virus replication. The protein is Major tegument protein of Epstein-Barr virus (strain GD1) (HHV-4).